The sequence spans 551 residues: Cilia- and flagella-associated protein 45 (551 aa).

Disordered stretches follow at residues 1–52 (MPLR…KSDS), 232–256 (MEID…ERVR), and 385–415 (EQDA…KKIE). Low complexity predominate over residues 8-18 (ASSSASTASNR). Residues 276–524 (AEHREQEKEQ…EDIKKQKLEE (249 aa)) are a coiled coil. Positions 387–415 (DALRAKRNQEVADREWRRKEKENAQKKIE) are enriched in basic and acidic residues.

It belongs to the CFAP45 family. In terms of assembly, microtubule inner protein component of sperm flagellar doublet microtubules. Interacts with AK8; dimerization with AK8 may create a cavity at the interface of the dimer that can accommodate AMP. Interacts with CFAP52. Interacts with ENKUR. Directly interacts with DNALI1. Interacts with DNAH11. Interacts with DNAI1. As to expression, expressed in respiratory cells and in sperm (at protein level).

The protein localises to the cytoplasm. It is found in the cytoskeleton. Its subcellular location is the cilium axoneme. The protein resides in the flagellum axoneme. It localises to the cell projection. The protein localises to the cilium. It is found in the flagellum. Functionally, microtubule inner protein (MIP) part of the dynein-decorated doublet microtubules (DMTs) in cilia axoneme, which is required for motile cilia beating. It is an AMP-binding protein that may facilitate dynein ATPase-dependent ciliary and flagellar beating via adenine nucleotide homeostasis. May function as a donor of AMP to AK8 and hence promote ADP production. The chain is Cilia- and flagella-associated protein 45 (Cfap45) from Mus musculus (Mouse).